We begin with the raw amino-acid sequence, 669 residues long: DNA ligase (669 aa).

NAD(+)-binding positions include 34–38, 83–84, and E114; these read DAEYD and SL. The active-site N6-AMP-lysine intermediate is the K116. Residues R137, E171, K287, and K311 each contribute to the NAD(+) site. Zn(2+) contacts are provided by C405, C408, C423, and C428. The region spanning 591 to 669 is the BRCT domain; it reads NVESYFAGKT…EERFLQELNK (79 aa).

It belongs to the NAD-dependent DNA ligase family. LigA subfamily. The cofactor is Mg(2+). Mn(2+) serves as cofactor.

It carries out the reaction NAD(+) + (deoxyribonucleotide)n-3'-hydroxyl + 5'-phospho-(deoxyribonucleotide)m = (deoxyribonucleotide)n+m + AMP + beta-nicotinamide D-nucleotide.. Its function is as follows. DNA ligase that catalyzes the formation of phosphodiester linkages between 5'-phosphoryl and 3'-hydroxyl groups in double-stranded DNA using NAD as a coenzyme and as the energy source for the reaction. It is essential for DNA replication and repair of damaged DNA. This is DNA ligase from Bacillus cereus (strain AH820).